The following is a 275-amino-acid chain: Dermonecrotic toxin SpeSicTox-betaIIA3ii (275 aa).

His-5 is a catalytic residue. Residues Glu-25 and Asp-27 each coordinate Mg(2+). The active-site Nucleophile is the His-41. Cystine bridges form between Cys-45/Cys-51 and Cys-47/Cys-190. Residue Asp-85 participates in Mg(2+) binding.

Belongs to the arthropod phospholipase D family. Class II subfamily. Mg(2+) serves as cofactor. In terms of tissue distribution, expressed by the venom gland.

The protein localises to the secreted. The enzyme catalyses an N-(acyl)-sphingosylphosphocholine = an N-(acyl)-sphingosyl-1,3-cyclic phosphate + choline. It catalyses the reaction an N-(acyl)-sphingosylphosphoethanolamine = an N-(acyl)-sphingosyl-1,3-cyclic phosphate + ethanolamine. The catalysed reaction is a 1-acyl-sn-glycero-3-phosphocholine = a 1-acyl-sn-glycero-2,3-cyclic phosphate + choline. It carries out the reaction a 1-acyl-sn-glycero-3-phosphoethanolamine = a 1-acyl-sn-glycero-2,3-cyclic phosphate + ethanolamine. Its function is as follows. Dermonecrotic toxins cleave the phosphodiester linkage between the phosphate and headgroup of certain phospholipids (sphingolipid and lysolipid substrates), forming an alcohol (often choline) and a cyclic phosphate. This toxin acts on sphingomyelin (SM). It may also act on ceramide phosphoethanolamine (CPE), lysophosphatidylcholine (LPC) and lysophosphatidylethanolamine (LPE), but not on lysophosphatidylserine (LPS), and lysophosphatidylglycerol (LPG). It acts by transphosphatidylation, releasing exclusively cyclic phosphate products as second products. Induces dermonecrosis, hemolysis, increased vascular permeability, edema, inflammatory response, and platelet aggregation. In Sicarius peruensis (Six-eyed sand spider), this protein is Dermonecrotic toxin SpeSicTox-betaIIA3ii.